We begin with the raw amino-acid sequence, 813 residues long: Calpain-7 (813 aa).

Residue methionine 1 is modified to N-acetylmethionine. Threonine 95 bears the Phosphothreonine mark. The 309-residue stretch at 232–540 folds into the Calpain catalytic domain; sequence RERFAYPMPF…YDVIYLSWNP (309 aa). Active-site residues include cysteine 290, histidine 458, and asparagine 478. Residues 541 to 701 are domain III; sequence GLFKESTCIH…INGKWSGQSA (161 aa). The interval 702 to 813 is domain N; sequence GGCGNFQETH…IIPIKITQLQ (112 aa).

Belongs to the peptidase C2 family. In terms of tissue distribution, ubiquitous.

The protein resides in the nucleus. In terms of biological role, calcium-regulated non-lysosomal thiol-protease. The polypeptide is Calpain-7 (CAPN7) (Homo sapiens (Human)).